The chain runs to 922 residues: Isoleucine--tRNA ligase (922 aa).

The 'HIGH' region signature appears at 58–68; the sequence is PYANGDIHIGH. Glutamate 552 is a binding site for L-isoleucyl-5'-AMP. Positions 593–597 match the 'KMSKS' region motif; it reads KMSKS. Lysine 596 lines the ATP pocket. Zn(2+) is bound by residues cysteine 885, cysteine 888, cysteine 905, and cysteine 908.

This sequence belongs to the class-I aminoacyl-tRNA synthetase family. IleS type 1 subfamily. Monomer. Requires Zn(2+) as cofactor.

It is found in the cytoplasm. The catalysed reaction is tRNA(Ile) + L-isoleucine + ATP = L-isoleucyl-tRNA(Ile) + AMP + diphosphate. Catalyzes the attachment of isoleucine to tRNA(Ile). As IleRS can inadvertently accommodate and process structurally similar amino acids such as valine, to avoid such errors it has two additional distinct tRNA(Ile)-dependent editing activities. One activity is designated as 'pretransfer' editing and involves the hydrolysis of activated Val-AMP. The other activity is designated 'posttransfer' editing and involves deacylation of mischarged Val-tRNA(Ile). This is Isoleucine--tRNA ligase from Ruthia magnifica subsp. Calyptogena magnifica.